Here is a 188-residue protein sequence, read N- to C-terminus: UPF0301 protein XCV3063 (188 aa).

Belongs to the UPF0301 (AlgH) family.

The chain is UPF0301 protein XCV3063 from Xanthomonas euvesicatoria pv. vesicatoria (strain 85-10) (Xanthomonas campestris pv. vesicatoria).